The sequence spans 656 residues: MGSVWGLAVPLLVFCWKVGVSVSSPGLDISRSVPLVTTNNMEVSTFTQRDRPSSERAFQTTNLIQYVPLDTQTLSTESASNALSATSISSEVNSRDTQTTSFVTKTRKTHTTTPAASSLEAQTTSPNLSTLNIQITSPIASSLDAQTIFPVSLSLSTQTTSPAPSFLDTQTTSPEPSSLTTSPAPSSLITSPTPSSLTTSPAPSFLDTQTTSPAPSSLTTSPAPSSLDTQTISPIELTLKTQTISTVTETRTVSIRIPSDLTVMHTIPTETLAPSNSPRTGMSTVQTGTVWDSIEAVFDTLCTDDSSEEARKITVDLLTLAHTSTEVEYLSSESSSSSDSSAGVLSSSRVLGPDSATPAKGLVAFNITHIKLSNCITEIETTITISGAPGASLSPTEATAALFTSEILTLPPPTEAKPIFPETTSLSGILSTAGTPALATTLEGTVSTSAITESETAVAQTLTSVGTSVTVRRNPLENTSTLSIETQSHTEVLGTITVPMVAGSTMGEAASFVSFTALDSSSLSVVVTTESSATSETLTTGNTTNSSFLTESHPPFSIYSTTASTSKNPNITLTKTTASPKPPTHPTTSASTAWIRKTTKHDPGEDGGFLLVRLTVASPKDLTEHNAREKLMNQLRRELHARMPLVHMSFLSIRRG.

An N-terminal signal peptide occupies residues 1–21 (MGSVWGLAVPLLVFCWKVGVS). Polar residues-rich tracts occupy residues 85–96 (ATSISSEVNSRD), 114–125 (PAASSLEAQTTS), and 159–170 (TTSPAPSFLDTQ). Disordered stretches follow at residues 85–125 (ATSI…QTTS), 159–232 (TTSP…TQTI), and 329–348 (YLSS…LSSS). Residues 171 to 227 (TTSPEPSSLTTSPAPSSLITSPTPSSLTTSPAPSFLDTQTTSPAPSSLTTSPAPSSL) are compositionally biased toward low complexity. Repeat copies occupy residues 180–188 (TTSPAPSSL), 189–197 (ITSPTPSSL), 198–206 (TTSPAPSFL), 210–218 (TTSPAPSSL), and 219–227 (TTSPAPSSL). The interval 180–227 (TTSPAPSSLITSPTPSSLTTSPAPSFLDTQTTSPAPSSLTTSPAPSSL) is approximate repeats. Residues Asn366 and Asn570 are each glycosylated (N-linked (GlcNAc...) asparagine). The involved in oligomerization stretch occupies residues 399 to 603 (TAALFTSEIL…WIRKTTKHDP (205 aa)). Positions 560–573 (STTASTSKNPNITL) are enriched in polar residues. Residues 560 to 592 (STTASTSKNPNITLTKTTASPKPPTHPTTSAST) form a disordered region. Residues 604-656 (GEDGGFLLVRLTVASPKDLTEHNAREKLMNQLRRELHARMPLVHMSFLSIRRG) form an interaction with MET region.

In terms of assembly, interacts with MET; oligomerization increases affinity for MET. In terms of tissue distribution, highly expressed in kidney. Up-regulated in renal tissues during renal injury.

The protein localises to the secreted. It is found in the apical cell membrane. The protein resides in the basolateral cell membrane. Its subcellular location is the cell projection. It localises to the microvillus membrane. Its function is as follows. May regulate MET signaling cascade. Seems to decrease hepatocyte growth factor (HGF)-induced transient MAPK activation. Blocks GRB2 recruitment to MET thus suppressing the GRB2-RAS pathway. Inhibits HGF-induced proliferation of MMP1 and MMP9 expression. The sequence is that of Mucin-20 (Muc20) from Mus musculus (Mouse).